We begin with the raw amino-acid sequence, 389 residues long: Sulfate adenylyltransferase (389 aa).

It belongs to the sulfate adenylyltransferase family.

The enzyme catalyses sulfate + ATP + H(+) = adenosine 5'-phosphosulfate + diphosphate. It participates in sulfur metabolism; hydrogen sulfide biosynthesis; sulfite from sulfate: step 1/3. The chain is Sulfate adenylyltransferase from Desulforamulus reducens (strain ATCC BAA-1160 / DSM 100696 / MI-1) (Desulfotomaculum reducens).